The sequence spans 890 residues: Putative RNA-binding protein 15B (890 aa).

The segment at 1–133 is disordered; the sequence is MKRQSERDSS…AEPACPGSSA (133 aa). Low complexity predominate over residues 10–20; it reads SPSGRGSSSSA. Basic and acidic residues-rich tracts occupy residues 22–34 and 66–78; these read RPREREREAEAGG and GHRDGRGTGDANH. The span at 86 to 99 shows a compositional bias: gly residues; that stretch reads SGSGAGGGGRGGKA. Phosphoserine occurs at positions 109 and 113. Pro residues predominate over residues 113-124; that stretch reads SPLPPPPPPPGA. The RRM 1 domain occupies 139 to 219; that stretch reads KTLLISSLSP…RPLKVEPVYL (81 aa). A Glycyl lysine isopeptide (Lys-Gly) (interchain with G-Cter in SUMO2) cross-link involves residue K213. Residues 219 to 253 are disordered; it reads LRGGGGSSRRSSSSSAAASTPPPGPPAPADPLGYL. A compositionally biased stretch (low complexity) spans 226-237; that stretch reads SRRSSSSSAAAS. A compositionally biased stretch (pro residues) spans 238-247; that stretch reads TPPPGPPAPA. Phosphoserine occurs at positions 265 and 267. RRM domains are found at residues 337 to 414 and 418 to 492; these read RNLF…YGKA and TRLW…FAKA. At T532 the chain carries Phosphothreonine. The segment at 547–705 is disordered; that stretch reads EGDWTSPSKS…KPLEEPKHET (159 aa). 3 positions are modified to phosphoserine: S552, S556, and S562. 2 stretches are compositionally biased toward basic and acidic residues: residues 573 to 616 and 626 to 646; these read RSGE…ERSR and RGSDRTPERSRKENHSSEGTK. The Nuclear localization signal motif lies at 593–597; the sequence is RRKRR. Residues 647–657 are compositionally biased toward low complexity; it reads ESSSNSLSNSR. The segment covering 671–703 has biased composition (basic and acidic residues); sequence EAADSSHGKKARDSERNHRTTEAEPKPLEEPKH. A Glycyl lysine isopeptide (Lys-Gly) (interchain with G-Cter in SUMO2) cross-link involves residue K702. Positions 711–889 constitute an SPOC domain; it reads LSEYAQTLQL…HMVIVIVRDT (179 aa). Residues 722–890 are interaction with Epstein-Barr virus BMLF1; sequence WNGLLVLKNS…MVIVIVRDTA (169 aa).

The protein belongs to the RRM Spen family. As to quaternary structure, component of the WMM complex, a N6-methyltransferase complex composed of a catalytic subcomplex, named MAC, and of an associated subcomplex, named MACOM. The MAC subcomplex is composed of METTL3 and METTL14. The MACOM subcomplex is composed of WTAP, ZC3H13, CBLL1/HAKAI, VIRMA, and, in some cases of RBM15 (RBM15 or RBM15B). May interact with NCOR2. Interacts with NXF1, the interaction is required to promote mRNA export. In terms of assembly, (Microbial infection) Interacts (via the SPOC domain) with Epstein-Barr virus BMLF1 (via the N-terminus); the interaction is direct. Ubiquitously expressed.

Its subcellular location is the nucleus. The protein localises to the nucleoplasm. It is found in the nucleus speckle. It localises to the nucleus envelope. In terms of biological role, RNA-binding protein that acts as a key regulator of N6-methyladenosine (m6A) methylation of RNAs, thereby regulating different processes, such as alternative splicing of mRNAs and X chromosome inactivation mediated by Xist RNA. Associated component of the WMM complex, a complex that mediates N6-methyladenosine (m6A) methylation of RNAs, a modification that plays a role in the efficiency of mRNA splicing and RNA processing. Plays a key role in m6A methylation, possibly by binding target RNAs and recruiting the WMM complex. Involved in random X inactivation mediated by Xist RNA: acts by binding Xist RNA and recruiting the WMM complex, which mediates m6A methylation, leading to target YTHDC1 reader on Xist RNA and promoting transcription repression activity of Xist. Functions in the regulation of alternative or illicit splicing, possibly by regulating m6A methylation. Inhibits pre-mRNA splicing. Also functions as a mRNA export factor by acting as a cofactor for the nuclear export receptor NXF1. The polypeptide is Putative RNA-binding protein 15B (Homo sapiens (Human)).